Reading from the N-terminus, the 208-residue chain is Myosin light chain 6B (208 aa).

Residues 1–51 (MPPKKDVPVKKPAGPSISKPAAKPAAAGAPPAKTKAEPAVPQAPQKTQEPP) form a disordered region. The segment covering 10-40 (KKPAGPSISKPAAKPAAAGAPPAKTKAEPAV) has biased composition (low complexity). 3 consecutive EF-hand domains span residues 64–99 (DQLE…LGQN), 141–176 (GTYE…LGEK), and 176–208 (KMTE…ILSV).

As to quaternary structure, myosin is a hexamer of 2 heavy chains and 4 light chains.

Its function is as follows. Regulatory light chain of myosin. Does not bind calcium. The chain is Myosin light chain 6B (MYL6B) from Homo sapiens (Human).